Consider the following 421-residue polypeptide: Testin (421 aa).

In terms of domain architecture, PET spans 92–199; it reads MILTNPVAAK…GDVKLPREMD (108 aa). The disordered stretch occupies residues 133–164; that stretch reads EKQPVAGSEGAQYRKKQLAKQLPAHDQDPSKC. Residues 155–164 are compositionally biased toward basic and acidic residues; the sequence is PAHDQDPSKC. LIM zinc-binding domains follow at residues 234–297, 299–359, and 362–421; these read YSCY…CDSE, PRCA…NHAV, and QGCH…KMMS.

It belongs to the prickle / espinas / testin family. Interacts via LIM domain 1 with ZYX. Interacts (via LIM domain 3) with ENAH and VASP. Interacts with ALKBH4, talin, actin, alpha-actinin, GRIP1 and PXN. Interacts (via LIM domain 2) with ACTL7A (via N-terminus). Heterodimer with ACTL7A; the heterodimer interacts with ENAH to form a heterotrimer.

Its subcellular location is the cytoplasm. It is found in the cell junction. The protein localises to the focal adhesion. Its function is as follows. Scaffold protein that may play a role in cell adhesion, cell spreading and in the reorganization of the actin cytoskeleton. Plays a role in the regulation of cell proliferation. May act as a tumor suppressor. The protein is Testin (TES) of Neofelis nebulosa (Clouded leopard).